The chain runs to 138 residues: Small ribosomal subunit protein uS11 (138 aa).

Residues 1–12 show a composition bias toward polar residues; sequence MAKQSAKGSTTT. Residues 1 to 37 form a disordered region; sequence MAKQSAKGSTTTKRQRGKRREKKNVPRGQAHIQSTFN. A compositionally biased stretch (basic residues) spans 13-22; that stretch reads KRQRGKRREK.

This sequence belongs to the universal ribosomal protein uS11 family. As to quaternary structure, part of the 30S ribosomal subunit. Interacts with proteins S7 and S18. Binds to IF-3.

Located on the platform of the 30S subunit, it bridges several disparate RNA helices of the 16S rRNA. Forms part of the Shine-Dalgarno cleft in the 70S ribosome. The polypeptide is Small ribosomal subunit protein uS11 (Roseiflexus castenholzii (strain DSM 13941 / HLO8)).